The following is a 544-amino-acid chain: Chaperonin GroEL 1 (544 aa).

ATP is bound by residues 29–32, 86–90, G413, 479–481, and D495; these read TLGP, DGTTT, and NAA. The interval 525-544 is disordered; it reads PEPKDNAPAGAGAGGGDFDY. A compositionally biased stretch (gly residues) spans 535-544; it reads AGAGGGDFDY.

It belongs to the chaperonin (HSP60) family. In terms of assembly, forms a cylinder of 14 subunits composed of two heptameric rings stacked back-to-back. Interacts with the co-chaperonin GroES.

It is found in the cytoplasm. It carries out the reaction ATP + H2O + a folded polypeptide = ADP + phosphate + an unfolded polypeptide.. Functionally, together with its co-chaperonin GroES, plays an essential role in assisting protein folding. The GroEL-GroES system forms a nano-cage that allows encapsulation of the non-native substrate proteins and provides a physical environment optimized to promote and accelerate protein folding. This Nostoc sp. (strain PCC 7120 / SAG 25.82 / UTEX 2576) protein is Chaperonin GroEL 1.